The primary structure comprises 767 residues: Phosphoribosylformylglycinamidine synthase subunit PurL (767 aa).

The active site involves histidine 65. Residues tyrosine 68 and lysine 112 each coordinate ATP. A Mg(2+)-binding site is contributed by glutamate 114. Residues serine 115 to histidine 118 and arginine 137 each bind substrate. The active-site Proton acceptor is histidine 116. Residue aspartate 138 coordinates Mg(2+). Glutamine 262 contributes to the substrate binding site. Mg(2+) is bound at residue aspartate 290. Glutamate 334–glutamine 336 provides a ligand contact to substrate. ATP is bound by residues aspartate 522 and glycine 559. Asparagine 560 is a Mg(2+) binding site. A substrate-binding site is contributed by serine 562.

It belongs to the FGAMS family. As to quaternary structure, monomer. Part of the FGAM synthase complex composed of 1 PurL, 1 PurQ and 2 PurS subunits.

The protein localises to the cytoplasm. It carries out the reaction N(2)-formyl-N(1)-(5-phospho-beta-D-ribosyl)glycinamide + L-glutamine + ATP + H2O = 2-formamido-N(1)-(5-O-phospho-beta-D-ribosyl)acetamidine + L-glutamate + ADP + phosphate + H(+). Its pathway is purine metabolism; IMP biosynthesis via de novo pathway; 5-amino-1-(5-phospho-D-ribosyl)imidazole from N(2)-formyl-N(1)-(5-phospho-D-ribosyl)glycinamide: step 1/2. Its function is as follows. Part of the phosphoribosylformylglycinamidine synthase complex involved in the purines biosynthetic pathway. Catalyzes the ATP-dependent conversion of formylglycinamide ribonucleotide (FGAR) and glutamine to yield formylglycinamidine ribonucleotide (FGAM) and glutamate. The FGAM synthase complex is composed of three subunits. PurQ produces an ammonia molecule by converting glutamine to glutamate. PurL transfers the ammonia molecule to FGAR to form FGAM in an ATP-dependent manner. PurS interacts with PurQ and PurL and is thought to assist in the transfer of the ammonia molecule from PurQ to PurL. This Renibacterium salmoninarum (strain ATCC 33209 / DSM 20767 / JCM 11484 / NBRC 15589 / NCIMB 2235) protein is Phosphoribosylformylglycinamidine synthase subunit PurL.